A 372-amino-acid chain; its full sequence is 4-hydroxy-3-methylbut-2-en-1-yl diphosphate synthase (flavodoxin) (372 aa).

Residues Cys-270, Cys-273, Cys-305, and Glu-312 each contribute to the [4Fe-4S] cluster site.

This sequence belongs to the IspG family. Requires [4Fe-4S] cluster as cofactor.

It carries out the reaction (2E)-4-hydroxy-3-methylbut-2-enyl diphosphate + oxidized [flavodoxin] + H2O + 2 H(+) = 2-C-methyl-D-erythritol 2,4-cyclic diphosphate + reduced [flavodoxin]. It participates in isoprenoid biosynthesis; isopentenyl diphosphate biosynthesis via DXP pathway; isopentenyl diphosphate from 1-deoxy-D-xylulose 5-phosphate: step 5/6. Converts 2C-methyl-D-erythritol 2,4-cyclodiphosphate (ME-2,4cPP) into 1-hydroxy-2-methyl-2-(E)-butenyl 4-diphosphate. In Salmonella arizonae (strain ATCC BAA-731 / CDC346-86 / RSK2980), this protein is 4-hydroxy-3-methylbut-2-en-1-yl diphosphate synthase (flavodoxin).